Reading from the N-terminus, the 96-residue chain is Protein Vpr (96 aa).

The interval 1-42 (MEQAPEDQGPQREPYNEWTLELLEELKSEAVRHFPRIWLHNL) is homooligomerization. Phosphoserine; by host occurs at positions 79, 94, and 96.

The protein belongs to the HIV-1 VPR protein family. Homooligomer, may form homodimer. Interacts with p6-gag region of the Pr55 Gag precursor protein through a (Leu-X-X)4 motif near the C-terminus of the P6gag protein. Interacts with host UNG. May interact with host RAD23A/HHR23A. Interacts with host VPRBP/DCAF1, leading to hijack the CUL4A-RBX1-DDB1-DCAF1/VPRBP complex, mediating ubiquitination of host proteins such as TERT and ZGPAT and arrest of the cell cycle in G2 phase. Post-translationally, phosphorylated on several residues by host. These phosphorylations regulate VPR activity for the nuclear import of the HIV-1 pre-integration complex.

Its subcellular location is the virion. The protein localises to the host nucleus. It localises to the host extracellular space. Its function is as follows. During virus replication, may deplete host UNG protein, and incude G2-M cell cycle arrest. Acts by targeting specific host proteins for degradation by the 26S proteasome, through association with the cellular CUL4A-DDB1 E3 ligase complex by direct interaction with host VPRPB/DCAF-1. Cell cycle arrest reportedly occurs within hours of infection and is not blocked by antiviral agents, suggesting that it is initiated by the VPR carried into the virion. Additionally, VPR induces apoptosis in a cell cycle dependent manner suggesting that these two effects are mechanistically linked. Detected in the serum and cerebrospinal fluid of AIDS patient, VPR may also induce cell death to bystander cells. In terms of biological role, during virus entry, plays a role in the transport of the viral pre-integration (PIC) complex to the host nucleus. This function is crucial for viral infection of non-dividing macrophages. May act directly at the nuclear pore complex, by binding nucleoporins phenylalanine-glycine (FG)-repeat regions. This is Protein Vpr from Homo sapiens (Human).